The following is a 127-amino-acid chain: Fumarate reductase subunit C (127 aa).

3 helical membrane passes run A30–V50, V67–F87, and I107–V127.

Belongs to the FrdC family. Part of an enzyme complex containing four subunits: a flavoprotein (FrdA), an iron-sulfur protein (FrdB), and two hydrophobic anchor proteins (FrdC and FrdD).

It localises to the cell inner membrane. Its function is as follows. Anchors the catalytic components of the fumarate reductase complex to the cell membrane, binds quinones. The sequence is that of Fumarate reductase subunit C from Vibrio vulnificus (strain CMCP6).